The following is a 269-amino-acid chain: MKIALGIEYNGQNYYGWQRQEKVRSVQEELEKALSHIANEKIEIFCAGRTDSGVSGTGQVVHFETNAVRPEKAWAFGTNAHLPDDIAVAWAKQVDDEFHARFSATARRYRYILYCNKLRSAILAGGITHCHLDLDAEKMHQAGQCLLGEQDFSSFRAAQCQSHTPWRNVHHLNVSRIGKYIIVDIQANAFVHHMVRNIVGSLIEVGAGNQPIEWMQWLLEQKNRQLAAPTAKPDGLYLVDVIYPQKFDIPKRPIGPLFLEDGLLNRTLK.

Asp51 (nucleophile) is an active-site residue. Tyr109 provides a ligand contact to substrate.

This sequence belongs to the tRNA pseudouridine synthase TruA family. As to quaternary structure, homodimer.

The enzyme catalyses uridine(38/39/40) in tRNA = pseudouridine(38/39/40) in tRNA. In terms of biological role, formation of pseudouridine at positions 38, 39 and 40 in the anticodon stem and loop of transfer RNAs. In Haemophilus influenzae (strain 86-028NP), this protein is tRNA pseudouridine synthase A.